The primary structure comprises 332 residues: Tetraacyldisaccharide 4'-kinase (332 aa).

58 to 65 (TVGGSGKT) lines the ATP pocket.

Belongs to the LpxK family.

The enzyme catalyses a lipid A disaccharide + ATP = a lipid IVA + ADP + H(+). It functions in the pathway glycolipid biosynthesis; lipid IV(A) biosynthesis; lipid IV(A) from (3R)-3-hydroxytetradecanoyl-[acyl-carrier-protein] and UDP-N-acetyl-alpha-D-glucosamine: step 6/6. In terms of biological role, transfers the gamma-phosphate of ATP to the 4'-position of a tetraacyldisaccharide 1-phosphate intermediate (termed DS-1-P) to form tetraacyldisaccharide 1,4'-bis-phosphate (lipid IVA). The chain is Tetraacyldisaccharide 4'-kinase from Shewanella piezotolerans (strain WP3 / JCM 13877).